The sequence spans 444 residues: Trigger factor (444 aa).

One can recognise a PPIase FKBP-type domain in the interval 170–255 (NDIAVIDFVG…LKAIKQLEIT (86 aa)).

Belongs to the FKBP-type PPIase family. Tig subfamily.

It localises to the cytoplasm. The catalysed reaction is [protein]-peptidylproline (omega=180) = [protein]-peptidylproline (omega=0). Involved in protein export. Acts as a chaperone by maintaining the newly synthesized protein in an open conformation. Functions as a peptidyl-prolyl cis-trans isomerase. The sequence is that of Trigger factor (tig) from Mycoplasma pneumoniae (strain ATCC 29342 / M129 / Subtype 1) (Mycoplasmoides pneumoniae).